We begin with the raw amino-acid sequence, 341 residues long: UDP-N-acetylenolpyruvoylglucosamine reductase (341 aa).

Residues 15–185 (LAQSCADLVE…TAVGLRLVKR (171 aa)) enclose the FAD-binding PCMH-type domain. Arg-161 is a catalytic residue. Ser-231 (proton donor) is an active-site residue. Glu-327 is a catalytic residue.

This sequence belongs to the MurB family. The cofactor is FAD.

The protein resides in the cytoplasm. The enzyme catalyses UDP-N-acetyl-alpha-D-muramate + NADP(+) = UDP-N-acetyl-3-O-(1-carboxyvinyl)-alpha-D-glucosamine + NADPH + H(+). The protein operates within cell wall biogenesis; peptidoglycan biosynthesis. Its function is as follows. Cell wall formation. This Shewanella baltica (strain OS195) protein is UDP-N-acetylenolpyruvoylglucosamine reductase.